The following is a 286-amino-acid chain: 2-hydroxy-6-oxo-6-phenylhexa-2,4-dienoate hydrolase (286 aa).

The AB hydrolase-1 domain maps to 36–271 (VIMLHGGGPG…RCGHWAQWEH (236 aa)). Residues 42–43 (GG), Asn-51, Asn-111, Ser-180, and Arg-190 each bind substrate. The active-site Proton acceptor is His-265. Trp-266 lines the substrate pocket.

Belongs to the AB hydrolase superfamily. BphD family. As to quaternary structure, homodimer.

The catalysed reaction is 2,6-dioxo-6-phenylhexa-3-enoate + H2O = 2-oxopent-4-enoate + benzoate + H(+). It participates in xenobiotic degradation; biphenyl degradation; 2-hydroxy-2,4-pentadienoate and benzoate from biphenyl: step 4/4. Its function is as follows. Catalyzes an unusual C-C bond hydrolysis of 2-hydroxy-6-oxo-6-phenylhexa-2,4-dienoic acid (HOPDA) to produce benzoic acid and 2-hydroxy-2,4-pentadienoic acid (HPD). The polypeptide is 2-hydroxy-6-oxo-6-phenylhexa-2,4-dienoate hydrolase (Burkholderia cepacia (Pseudomonas cepacia)).